A 943-amino-acid polypeptide reads, in one-letter code: Isoleucine--tRNA ligase (943 aa).

The short motif at 58-68 is the 'HIGH' region element; that stretch reads PYANGSIHIGH. Residue E567 participates in L-isoleucyl-5'-AMP binding. Residues 608–612 carry the 'KMSKS' region motif; it reads KMSKS. K611 contributes to the ATP binding site. Residues C906, C909, C926, and C929 each coordinate Zn(2+).

The protein belongs to the class-I aminoacyl-tRNA synthetase family. IleS type 1 subfamily. Monomer. The cofactor is Zn(2+).

The protein resides in the cytoplasm. It carries out the reaction tRNA(Ile) + L-isoleucine + ATP = L-isoleucyl-tRNA(Ile) + AMP + diphosphate. Functionally, catalyzes the attachment of isoleucine to tRNA(Ile). As IleRS can inadvertently accommodate and process structurally similar amino acids such as valine, to avoid such errors it has two additional distinct tRNA(Ile)-dependent editing activities. One activity is designated as 'pretransfer' editing and involves the hydrolysis of activated Val-AMP. The other activity is designated 'posttransfer' editing and involves deacylation of mischarged Val-tRNA(Ile). This Pseudomonas fluorescens (strain ATCC BAA-477 / NRRL B-23932 / Pf-5) protein is Isoleucine--tRNA ligase.